The primary structure comprises 329 residues: Glycerol-3-phosphate dehydrogenase [NAD(P)+] (329 aa).

NADPH is bound by residues tryptophan 15, histidine 35, and lysine 107. Sn-glycerol 3-phosphate contacts are provided by lysine 107, glycine 135, and serine 137. An NADPH-binding site is contributed by alanine 139. Lysine 190, aspartate 243, serine 253, arginine 254, and asparagine 255 together coordinate sn-glycerol 3-phosphate. Lysine 190 serves as the catalytic Proton acceptor. Arginine 254 provides a ligand contact to NADPH. 2 residues coordinate NADPH: leucine 276 and glutamate 278.

Belongs to the NAD-dependent glycerol-3-phosphate dehydrogenase family.

It is found in the cytoplasm. It catalyses the reaction sn-glycerol 3-phosphate + NAD(+) = dihydroxyacetone phosphate + NADH + H(+). The catalysed reaction is sn-glycerol 3-phosphate + NADP(+) = dihydroxyacetone phosphate + NADPH + H(+). Its pathway is membrane lipid metabolism; glycerophospholipid metabolism. In terms of biological role, catalyzes the reduction of the glycolytic intermediate dihydroxyacetone phosphate (DHAP) to sn-glycerol 3-phosphate (G3P), the key precursor for phospholipid synthesis. The sequence is that of Glycerol-3-phosphate dehydrogenase [NAD(P)+] from Rhodopseudomonas palustris (strain HaA2).